The following is a 150-amino-acid chain: UPF0260 protein PP_4587 (150 aa).

It belongs to the UPF0260 family.

The sequence is that of UPF0260 protein PP_4587 from Pseudomonas putida (strain ATCC 47054 / DSM 6125 / CFBP 8728 / NCIMB 11950 / KT2440).